The following is a 108-amino-acid chain: Cytochrome bo(3) ubiquinol oxidase subunit 4 (108 aa).

At 1-16 (MNKYKKIKNNFDKEKK) the chain is on the cytoplasmic side. The chain crosses the membrane as a helical span at residues 17-37 (SYIVGFLFSLFLTIIPFFCTL). Residues 38–46 (NHLFSRKIN) are Extracellular-facing. A helical membrane pass occupies residues 47-67 (FFVILLCALSQIIIHFIYFLH). Topologically, residues 68-77 (LDFSKKNSWN) are cytoplasmic. The chain crosses the membrane as a helical span at residues 78–98 (IISLLFILIIVFIIVFGSIWI). Residues 99 to 108 (MYNLNHHVIL) are Extracellular-facing.

The protein belongs to the cytochrome c oxidase bacterial subunit 4 family. As to quaternary structure, heterooctamer of two A chains, two B chains, two C chains and two D chains.

It localises to the cell membrane. In terms of biological role, cytochrome bo(3) ubiquinol terminal oxidase is the component of the aerobic respiratory chain of E.coli that predominates when cells are grown at high aeration. Has proton pump activity across the membrane in addition to electron transfer, pumping 2 protons/electron. This Buchnera aphidicola subsp. Schizaphis graminum (strain Sg) protein is Cytochrome bo(3) ubiquinol oxidase subunit 4 (cyoD).